Consider the following 396-residue polypeptide: MILVVNAGSSSIKFRLFNDLDKSNPIDILDGLAERITVDGAVSFKYEGKKYEYNVELPNHEVAIKFILDKLIELNIISNVDDINAVGFRVVHGGTISKSSIIDQKVFDTIKDAVKLAPLHNPGAITAIEAIEKVMPKAKLVACFDTAYHQTLAEEQYLYAVPYSWYKEHGVRKYGFHGISYQYIAEKMSEVLAKPKDQLNLIVCHLGNGASITCIKNGKSFDTTMGLTPLAGVMMGTRSGDIDPSIIEYMCKELQLDVSKITNILNKESGLLGLSGKSSDMRDVTGGYFKGDEDYKRALNKYTQVSADYIIRFANLLGHNIDGIVFTAGVGENSIHTRQFILEKLPLLDIEIDNAKNEESYGDYKYISSPNSKIKVLAVRTNEELMICKDTINLTK.

Asn-6 is a binding site for Mg(2+). Lys-13 lines the ATP pocket. Arg-89 contributes to the substrate binding site. Asp-145 serves as the catalytic Proton donor/acceptor. Residues 205-209 (HLGNG), 280-282 (DMR), and 329-333 (GVGEN) each bind ATP. Glu-383 provides a ligand contact to Mg(2+).

The protein belongs to the acetokinase family. As to quaternary structure, homodimer. The cofactor is Mg(2+). Requires Mn(2+) as cofactor.

It localises to the cytoplasm. It catalyses the reaction acetate + ATP = acetyl phosphate + ADP. It functions in the pathway metabolic intermediate biosynthesis; acetyl-CoA biosynthesis; acetyl-CoA from acetate: step 1/2. In terms of biological role, catalyzes the formation of acetyl phosphate from acetate and ATP. Can also catalyze the reverse reaction. This chain is Acetate kinase, found in Mesoplasma florum (strain ATCC 33453 / NBRC 100688 / NCTC 11704 / L1) (Acholeplasma florum).